Reading from the N-terminus, the 414-residue chain is DNA polymerase IV 1 (414 aa).

The UmuC domain occupies 8-189 (IFHIDMNSFY…LPVGEMHGVG (182 aa)). Residues Asp-12 and Asp-108 each contribute to the Mg(2+) site. The active site involves Glu-109. Residues 391 to 414 (LKKEESKTKGTSFNKDFFQDEKKS) form a disordered region.

This sequence belongs to the DNA polymerase type-Y family. As to quaternary structure, monomer. The cofactor is Mg(2+).

The protein resides in the cytoplasm. The enzyme catalyses DNA(n) + a 2'-deoxyribonucleoside 5'-triphosphate = DNA(n+1) + diphosphate. Its function is as follows. Poorly processive, error-prone DNA polymerase involved in untargeted mutagenesis. Copies undamaged DNA at stalled replication forks, which arise in vivo from mismatched or misaligned primer ends. These misaligned primers can be extended by PolIV. Exhibits no 3'-5' exonuclease (proofreading) activity. May be involved in translesion synthesis (TSL), in conjunction with the beta clamp from PolIII. The protein is DNA polymerase IV 1 (dinB1) of Bacillus subtilis (strain 168).